The following is a 483-amino-acid chain: MFS-type transporter hepF (483 aa).

The tract at residues 1-31 (METPAGKADRPRDHDSEQSQDNVVSWEGEDD) is disordered. The segment covering 7–17 (KADRPRDHDSE) has biased composition (basic and acidic residues). Transmembrane regions (helical) follow at residues 89-109 (TIVV…AAPI), 124-144 (ILYT…MLIV), 147-167 (FFAG…VADL), 179-199 (FVTL…GFLT), 206-226 (WVFW…ILFT), 276-296 (PISL…YVLV), 311-331 (IGIS…GLWI), 357-377 (PMMI…GWSV), 385-405 (MPIV…MPMV), 416-436 (AASA…VLPL), and 448-468 (GWGN…LIAI).

The protein belongs to the major facilitator superfamily.

It is found in the cell membrane. In terms of biological role, MFS-type transporter; part of the gene cluster that mediates the biosynthesis of heptelidic acid (HA), a sesquiterpene lactone that acts as an inhibitor of glyceraldehyde-3-phosphatedehydrogenase (GAPDH) and a growth inhibitor of the salt-tolerant lactic acid bacteria in soy sauce brewing. Might be required for efficient secretion of heptelidic acid. The polypeptide is MFS-type transporter hepF (hepF) (Aspergillus oryzae (strain ATCC 42149 / RIB 40) (Yellow koji mold)).